Consider the following 208-residue polypeptide: Protein-L-isoaspartate O-methyltransferase (208 aa).

Ser59 is a catalytic residue.

Belongs to the methyltransferase superfamily. L-isoaspartyl/D-aspartyl protein methyltransferase family.

It localises to the cytoplasm. It catalyses the reaction [protein]-L-isoaspartate + S-adenosyl-L-methionine = [protein]-L-isoaspartate alpha-methyl ester + S-adenosyl-L-homocysteine. Functionally, catalyzes the methyl esterification of L-isoaspartyl residues in peptides and proteins that result from spontaneous decomposition of normal L-aspartyl and L-asparaginyl residues. It plays a role in the repair and/or degradation of damaged proteins. This Vibrio campbellii (strain ATCC BAA-1116) protein is Protein-L-isoaspartate O-methyltransferase.